The following is a 285-amino-acid chain: Ribosomal protein L11 methyltransferase (285 aa).

Residues Thr131, Gly154, Asp176, and Asn223 each coordinate S-adenosyl-L-methionine.

This sequence belongs to the methyltransferase superfamily. PrmA family.

It localises to the cytoplasm. The enzyme catalyses L-lysyl-[protein] + 3 S-adenosyl-L-methionine = N(6),N(6),N(6)-trimethyl-L-lysyl-[protein] + 3 S-adenosyl-L-homocysteine + 3 H(+). Its function is as follows. Methylates ribosomal protein L11. In Brucella suis (strain ATCC 23445 / NCTC 10510), this protein is Ribosomal protein L11 methyltransferase.